A 166-amino-acid polypeptide reads, in one-letter code: NAD(P)H-quinone oxidoreductase subunit I, chloroplastic (166 aa).

2 consecutive 4Fe-4S ferredoxin-type domains span residues 55-84 (GRIHFEFDKCIACEVCVRVCPIDLPVVDWK) and 95-124 (LNYSIDFGICIFCGNCVEYCPTNCLSMTEE). 8 residues coordinate [4Fe-4S] cluster: Cys64, Cys67, Cys70, Cys74, Cys104, Cys107, Cys110, and Cys114.

The protein belongs to the complex I 23 kDa subunit family. In terms of assembly, NDH is composed of at least 16 different subunits, 5 of which are encoded in the nucleus. The cofactor is [4Fe-4S] cluster.

It localises to the plastid. The protein resides in the chloroplast thylakoid membrane. It catalyses the reaction a plastoquinone + NADH + (n+1) H(+)(in) = a plastoquinol + NAD(+) + n H(+)(out). It carries out the reaction a plastoquinone + NADPH + (n+1) H(+)(in) = a plastoquinol + NADP(+) + n H(+)(out). Its function is as follows. NDH shuttles electrons from NAD(P)H:plastoquinone, via FMN and iron-sulfur (Fe-S) centers, to quinones in the photosynthetic chain and possibly in a chloroplast respiratory chain. The immediate electron acceptor for the enzyme in this species is believed to be plastoquinone. Couples the redox reaction to proton translocation, and thus conserves the redox energy in a proton gradient. The chain is NAD(P)H-quinone oxidoreductase subunit I, chloroplastic from Palafoxia arida (Spanish needles).